A 182-amino-acid polypeptide reads, in one-letter code: Homeobox protein pnx (182 aa).

The tract at residues 1-34 (MHEETSNSTLQGKTSFSIADILDPAKFNGTRETR) is important for interaction with tle3a. Residues 24–63 (PAKFNGTRETREISNNRESPKTTSPTQDPSAPNIANASAA) are disordered. Residues 29–43 (GTRETREISNNRESP) are compositionally biased toward basic and acidic residues. Over residues 52–63 (PSAPNIANASAA) the composition is skewed to low complexity. The homeobox DNA-binding region spans 67 to 126 (SKRIRTAFTLDQLRILERSFQSSHYLSVFERHCIASALGLSETQVKIWFQNRRTKWKKEL).

The protein belongs to the NK-1 homeobox family. In terms of assembly, interacts with tle3a.

It localises to the nucleus. Its function is as follows. Transcriptional repressor. Activity as a repressor is enhanced by binding to the corepressor tle3a. This chain is Homeobox protein pnx, found in Danio rerio (Zebrafish).